The sequence spans 24 residues: N-acyl-L-amino acid amidohydrolase (24 aa).

The protein belongs to the peptidase M20 family. As to quaternary structure, homotetramer. The cofactor is Co(2+).

It carries out the reaction an N-acyl-L-amino acid + H2O = an L-alpha-amino acid + a carboxylate. It catalyses the reaction an N-acetyl-L-cysteine-S-conjugate + H2O = an S-substituted L-cysteine + acetate. This chain is N-acyl-L-amino acid amidohydrolase, found in Parageobacillus thermoglucosidasius (Geobacillus thermoglucosidasius).